The following is a 200-amino-acid chain: Nitrile hydratase subunit alpha (200 aa).

Residues Cys-105, Cys-108, Ser-109, and Cys-110 each contribute to the Fe(3+) site. Residue Cys-108 is modified to Cysteine sulfinic acid (-SO2H). At Cys-110 the chain carries Cysteine sulfenic acid (-SOH).

The protein belongs to the nitrile hydratase subunit alpha family. Heterodimer of an alpha and a beta chain. Fe(3+) serves as cofactor. Post-translationally, oxidation on Cys-108 is essential for the activity. In terms of processing, oxidation on Cys-110 stabilizes the Fe-NO ligand coordinated in the inactive form.

The catalysed reaction is an aliphatic primary amide = an aliphatic nitrile + H2O. With respect to regulation, inactivated by oxidation of Cys-110 to a sulfenic acid. Its function is as follows. NHase catalyzes the hydration of various nitrile compounds to the corresponding amides. Industrial production of acrylamide is now being developed using some of the enzymes of this class. This chain is Nitrile hydratase subunit alpha (nthA), found in Pseudomonas chlororaphis (Pseudomonas aureofaciens).